The sequence spans 52 residues: Conotoxin Cal6.3b (52 aa).

Residues 1-4 (KKKR) constitute a propeptide that is removed on maturation. Cystine bridges form between cysteine 12/cysteine 23, cysteine 15/cysteine 27, and cysteine 22/cysteine 30. Glutamine 50 carries the post-translational modification Glutamine amide.

As to expression, expressed by the venom duct.

Its subcellular location is the secreted. Its function is as follows. Probable neurotoxin with unknown target. Possibly targets ion channels. In Californiconus californicus (California cone), this protein is Conotoxin Cal6.3b.